A 346-amino-acid polypeptide reads, in one-letter code: MHRFLFALDPEAAHGLALGLLAFWSERGPLLEVPARLLRVEDPRLRVEAFGVSFPNPLGLAAGMDKDARALGAWWALGFGFAEVGTLTPRPQVGNPKPRLFRLVEDRALINRMGFNNRGAEEAARCLKRFRQRGLPLPLGVNLGKNRDTPLERAAEDYLKALRFLEPFGDYFVLNVSSPNTPGLRALQEGPFLDELLARLRPATPKPLLLKVAPDLSPKALDEVLALTKKHRLQGLVAVNTTLAREGLKSPLAREAGGLSGRPLKRRALEVLRHLAEGAEGLALVSVGGVETPLDLWERLKAGASLVQVYTGFVYGGPLFPRRLLLGLLRLMEAEGVSSLGELRRA.

Residues 62–66 and threonine 86 each bind FMN; that span reads AGMDK. Lysine 66 is a substrate binding site. 111 to 115 is a substrate binding site; that stretch reads NRMGF. FMN contacts are provided by asparagine 142 and asparagine 175. Asparagine 175 serves as a coordination point for substrate. Serine 178 serves as the catalytic Nucleophile. Residue asparagine 180 participates in substrate binding. Positions 211 and 239 each coordinate FMN. 240–241 is a binding site for substrate; sequence NT. FMN is bound by residues glycine 261, glycine 289, and 310 to 311; that span reads YT.

The protein belongs to the dihydroorotate dehydrogenase family. Type 2 subfamily. Monomer. FMN is required as a cofactor.

It localises to the cell membrane. The catalysed reaction is (S)-dihydroorotate + a quinone = orotate + a quinol. The protein operates within pyrimidine metabolism; UMP biosynthesis via de novo pathway; orotate from (S)-dihydroorotate (quinone route): step 1/1. In terms of biological role, catalyzes the conversion of dihydroorotate to orotate with quinone as electron acceptor. The polypeptide is Dihydroorotate dehydrogenase (quinone) (Thermus thermophilus (strain ATCC BAA-163 / DSM 7039 / HB27)).